Consider the following 519-residue polypeptide: Ribonuclease Y (519 aa).

The helical transmembrane segment at 3-23 (LMIFAYIAIGAVLGAGTGYLL) threads the bilayer. A KH domain is found at 209–272 (TVTAVTLPSE…QVAKMALERL (64 aa)). The HD domain maps to 335–428 (VLQHSLEVSA…VQAADSISGA (94 aa)).

Belongs to the RNase Y family.

Its subcellular location is the cell membrane. In terms of biological role, endoribonuclease that initiates mRNA decay. In Nitratidesulfovibrio vulgaris (strain ATCC 29579 / DSM 644 / CCUG 34227 / NCIMB 8303 / VKM B-1760 / Hildenborough) (Desulfovibrio vulgaris), this protein is Ribonuclease Y.